Consider the following 396-residue polypeptide: L-lactate dehydrogenase (396 aa).

Residues 1-380 form the FMN hydroxy acid dehydrogenase domain; it reads MIISAASDYR…TQDSLVQVLG (380 aa). Y24 is a binding site for substrate. FMN-binding residues include S106 and Q127. Y129 is a binding site for substrate. T155 provides a ligand contact to FMN. R164 lines the substrate pocket. K251 is a binding site for FMN. H275 (proton acceptor) is an active-site residue. R278 provides a ligand contact to substrate. 306 to 330 contacts FMN; that stretch reads DSGIRNGLDVVRMIALGADTVLLGR.

Belongs to the FMN-dependent alpha-hydroxy acid dehydrogenase family. FMN is required as a cofactor.

It localises to the cell inner membrane. The catalysed reaction is (S)-lactate + A = pyruvate + AH2. In terms of biological role, catalyzes the conversion of L-lactate to pyruvate. Is coupled to the respiratory chain. The protein is L-lactate dehydrogenase of Escherichia coli O45:K1 (strain S88 / ExPEC).